Consider the following 403-residue polypeptide: Nodal homolog (403 aa).

The first 18 residues, 1–18 (MAFLTAVLCFGFACMVQG), serve as a signal peptide directing secretion. The propeptide occupies 19–278 (VPSWLESRIP…RMPGIRRHRR (260 aa)). Asn-68, Asn-133, and Asn-169 each carry an N-linked (GlcNAc...) asparagine glycan. The interval 195–220 (AERGSGMSSAEFLDSPGDSPQYNPHH) is disordered. Intrachain disulfides connect Cys-303–Cys-369, Cys-332–Cys-400, and Cys-336–Cys-402. Asn-341 carries an N-linked (GlcNAc...) asparagine glycan.

The protein belongs to the TGF-beta family. In terms of assembly, homodimer; disulfide-linked. Interacts with, and is inhibited by cer1 and gdf10/bmp3b.

Its subcellular location is the secreted. Functionally, cooperation and regulatory loops of multiple nodals are essential for mesendoderm patterning in early embryos. Essential for mesoderm formation and axial patterning during embryonic development. Activates the activin-like signaling pathway to induce dorsal and ventral mesoderm in animal cap ectoderm. In addition, also dorsalizes ventral marginal zone (VMZ) tissues during gastrulation. Acts in a downstream signaling cascade via cripto and cer1 to mediate cardiogenesis in embryonic mesoderm. Directs the orientation of the left-right axis by driving the left-specific gene cascade in the left lateral plate mesoderm. This Xenopus tropicalis (Western clawed frog) protein is Nodal homolog.